Reading from the N-terminus, the 249-residue chain is 2,3-bisphosphoglycerate-dependent phosphoglycerate mutase (249 aa).

Residues 11–18, 24–25, arginine 63, 90–93, lysine 101, and 117–118 each bind substrate; these read RHGESEWN, TG, ERHY, and RR. Histidine 12 acts as the Tele-phosphohistidine intermediate in catalysis. Glutamate 90 serves as the catalytic Proton donor/acceptor. The tract at residues 119-138 is disordered; that stretch reads SYDTPPPPIERGSTYSQDAD. A substrate-binding site is contributed by 184-185; the sequence is GN.

Belongs to the phosphoglycerate mutase family. BPG-dependent PGAM subfamily.

The catalysed reaction is (2R)-2-phosphoglycerate = (2R)-3-phosphoglycerate. The protein operates within carbohydrate degradation; glycolysis; pyruvate from D-glyceraldehyde 3-phosphate: step 3/5. Catalyzes the interconversion of 2-phosphoglycerate and 3-phosphoglycerate. The sequence is that of 2,3-bisphosphoglycerate-dependent phosphoglycerate mutase from Mycolicibacterium paratuberculosis (strain ATCC BAA-968 / K-10) (Mycobacterium paratuberculosis).